The chain runs to 1571 residues: Disco-interacting protein 2 homolog A (1571 aa).

The region spanning glutamate 9–serine 127 is the DMAP1-binding domain. Residues leucine 60–alanine 203 form a disordered region. A compositionally biased stretch (basic and acidic residues) spans alanine 86–threonine 98. A Phosphoserine modification is found at serine 94. 2 stretches are compositionally biased toward polar residues: residues serine 127–alanine 139 and leucine 152–serine 162. Residues threonine 132 and threonine 155 each carry the phosphothreonine modification. The span at serine 174–alanine 203 shows a compositional bias: low complexity. 2 consecutive short sequence motifs (PXXP motif; required for interaction with CTTN) follow at residues proline 283–proline 286 and proline 307–proline 310. A disordered region spans residues valine 302–alanine 327.

This sequence belongs to the DIP2 family. In terms of assembly, interacts with FSTL1; DIP2A may act as a cell surface receptor for FSTL1. Interacts (via N-terminus) with CTTN (via SH3 domain); the interaction promotes acetylation of CTTN and is required for proper synaptic transmission. Interacts with SHANK3. In terms of tissue distribution, low expression in all tissues tested.

It is found in the cell membrane. The protein resides in the mitochondrion. The protein localises to the cell projection. Its subcellular location is the dendritic spine. It catalyses the reaction acetate + ATP + CoA = acetyl-CoA + AMP + diphosphate. In terms of biological role, catalyzes the de novo synthesis of acetyl-CoA in vitro. Promotes acetylation of CTTN, possibly by providing the acetyl donor, ensuring correct dendritic spine morphology and synaptic transmission. Binds to follistatin-related protein FSTL1 and may act as a cell surface receptor for FSTL1, contributing to AKT activation and subsequent FSTL1-induced survival and function of endothelial cells and cardiac myocytes. The chain is Disco-interacting protein 2 homolog A (DIP2A) from Homo sapiens (Human).